A 1522-amino-acid polypeptide reads, in one-letter code: Adhesion G protein-coupled receptor B3 (1522 aa).

Residues 1 to 25 form the signal peptide; the sequence is MKAVRNLLIYIFSTYLLVMFGFNAA. Over 26-880 the chain is Extracellular; that stretch reads QDFWCSTLVK…MESSGTPSVT (855 aa). A CUB domain is found at 30–159; it reads CSTLVKGVIY…KSFFEFLVLN (130 aa). Residues asparagine 51, asparagine 54, asparagine 82, asparagine 105, and asparagine 241 are each glycosylated (N-linked (GlcNAc...) asparagine). 4 consecutive TSP type-1 domains span residues 291-343, 345-398, 400-453, and 455-508; these read ESGV…ALCP, HGVW…ALCP, DGQW…PECT, and NGQW…QRCP. Cystine bridges form between cysteine 303–cysteine 336, cysteine 307–cysteine 342, cysteine 318–cysteine 326, cysteine 357–cysteine 392, cysteine 361–cysteine 397, cysteine 372–cysteine 382, cysteine 412–cysteine 447, cysteine 416–cysteine 452, cysteine 427–cysteine 437, cysteine 467–cysteine 502, cysteine 471–cysteine 507, cysteine 482–cysteine 492, cysteine 514–cysteine 549, and cysteine 537–cysteine 567. A glycan (N-linked (GlcNAc...) asparagine) is linked at asparagine 337. A glycan (N-linked (GlcNAc...) asparagine) is linked at asparagine 418. Asparagine 540 is a glycosylation site (N-linked (GlcNAc...) asparagine). The residue at position 619 (serine 619) is a Phosphoserine. 4 N-linked (GlcNAc...) asparagine glycosylation sites follow: asparagine 625, asparagine 779, asparagine 812, and asparagine 828. Residues 693-869 enclose the GAIN-B domain; it reads QNSYLMTGNV…AILAQQPREI (177 aa). 2 disulfide bridges follow: cysteine 819/cysteine 851 and cysteine 839/cysteine 853. The segment at 819 to 869 is GPS; it reads CVLWDDSKSNESLGTWSTQGCKTVLTDASHTKCLCDRLSTFAILAQQPREI. The chain crosses the membrane as a helical span at residues 881 to 901; that stretch reads LIVGSGLSCLALITLAVVYAA. The Cytoplasmic portion of the chain corresponds to 902 to 910; it reads LWRYIRSER. Residues 911 to 931 traverse the membrane as a helical segment; the sequence is SIILINFCLSIISSNILILVG. Topologically, residues 932–939 are extracellular; the sequence is QTQTHNKS. A glycan (N-linked (GlcNAc...) asparagine) is linked at asparagine 937. The chain crosses the membrane as a helical span at residues 940–960; it reads ICTTTTAFLHFFFLASFCWVL. At 961–981 the chain is on the cytoplasmic side; sequence TEAWQSYMAVTGKIRTRLIRK. A helical transmembrane segment spans residues 982–1002; sequence RFLCLGWGLPALVVATSVGFT. At 1003–1023 the chain is on the extracellular side; sequence RTKGYGTDHYCWLSLEGGLLY. The helical transmembrane segment at 1024-1044 threads the bilayer; it reads AFVGPAAAVVLVNMVIGILVF. Topologically, residues 1045 to 1098 are cytoplasmic; sequence NKLVSRDGILDKKLKHRAGQMSEPHSGLTLKCAKCGVVSTTALSATTASNAMAS. A helical transmembrane segment spans residues 1099 to 1119; the sequence is LWSSCVVLPLLALTWMSAVLA. The Extracellular portion of the chain corresponds to 1120–1125; the sequence is MTDKRS. The chain crosses the membrane as a helical span at residues 1126 to 1146; the sequence is ILFQILFAVFDSLQGFVIVMV. The Cytoplasmic portion of the chain corresponds to 1147-1522; sequence HCILRREVQD…VQEGDFQTEV (376 aa). Serine 1220 and serine 1411 each carry phosphoserine.

This sequence belongs to the G-protein coupled receptor 2 family. Adhesion G-protein coupled receptor (ADGR) subfamily. Forms a heterodimer, consisting of a large extracellular region non-covalently linked to a seven-transmembrane moiety. Interacts (via its TSRs) with C1QL1, C1QL2, C1QL3 and C1QL4. Interacts via (C-terminus) with ELMO1, ELMO2 and ELMO3. In terms of processing, the endogenous protein is proteolytically cleaved into 2 subunits, an extracellular subunit and a seven-transmembrane subunit. Brain-specific expression.

Its subcellular location is the cell membrane. In terms of biological role, receptor that plays a role in the regulation of synaptogenesis and dendritic spine formation at least partly via interaction with ELMO1 and RAC1 activity. Promotes myoblast fusion through ELMO/DOCK1. This is Adhesion G protein-coupled receptor B3 (Adgrb3) from Mus musculus (Mouse).